The sequence spans 305 residues: MTTRTEAVKAYLLDLQDRICAALETEDGGARFIEDAWTRPAGGGGRTRVIGDGAVIEKGGVNFSHVFGSGLPPSASAHRPELAGRGFEALGVSLVIHPHNPHVPTSHANVRFFIAEKEGEEPVWWFGGGFDLTPYYGNIDDCVHWHRVAERACAPFGADVYPRYKAWCDSYFHIKHRNEPRGIGGLFFDDLNEWDFDTSFAFMRAIGDAYIEAYLPIVQRRKAAAYTAQQREFQEFRRGRYVEFNLVYDRGTLFGLQSGGRTESILMSLPPQVRWGYDWKAEPGSEEARLTEYFLQDRDWLAASN.

Position 93 (Ser93) interacts with substrate. His97 and His107 together coordinate a divalent metal cation. The active-site Proton donor is the His107. Position 109-111 (109-111) interacts with substrate; sequence NVR. Residues His146 and His176 each coordinate a divalent metal cation. Residues 241–276 form an important for dimerization region; that stretch reads YVEFNLVYDRGTLFGLQSGGRTESILMSLPPQVRWG. 259–261 provides a ligand contact to substrate; that stretch reads GGR.

It belongs to the aerobic coproporphyrinogen-III oxidase family. In terms of assembly, homodimer. It depends on a divalent metal cation as a cofactor.

It localises to the cytoplasm. The catalysed reaction is coproporphyrinogen III + O2 + 2 H(+) = protoporphyrinogen IX + 2 CO2 + 2 H2O. It functions in the pathway porphyrin-containing compound metabolism; protoporphyrin-IX biosynthesis; protoporphyrinogen-IX from coproporphyrinogen-III (O2 route): step 1/1. Functionally, involved in the heme biosynthesis. Catalyzes the aerobic oxidative decarboxylation of propionate groups of rings A and B of coproporphyrinogen-III to yield the vinyl groups in protoporphyrinogen-IX. In Pseudomonas fluorescens (strain ATCC BAA-477 / NRRL B-23932 / Pf-5), this protein is Oxygen-dependent coproporphyrinogen-III oxidase.